The primary structure comprises 208 residues: Small ribosomal subunit protein uS4 (208 aa).

The S4 RNA-binding domain occupies 98–158; sequence RRLDNIAYRL…EKSRKVACIN (61 aa).

Belongs to the universal ribosomal protein uS4 family. Part of the 30S ribosomal subunit. Contacts protein S5. The interaction surface between S4 and S5 is involved in control of translational fidelity.

Functionally, one of the primary rRNA binding proteins, it binds directly to 16S rRNA where it nucleates assembly of the body of the 30S subunit. With S5 and S12 plays an important role in translational accuracy. This chain is Small ribosomal subunit protein uS4, found in Geotalea uraniireducens (strain Rf4) (Geobacter uraniireducens).